The following is a 254-amino-acid chain: HTH-type transcriptional regulator GolR (254 aa).

The 56-residue stretch at 3-58 (PFERQNKIIHLLDQNNKITVPELSRILDVSISTIRNDLSALEESGMIKKVHGGAVL) folds into the HTH deoR-type domain. The segment at residues 20-39 (ITVPELSRILDVSISTIRND) is a DNA-binding region (H-T-H motif).

Involved in the glycerol metabolism. Repressor of the gol operon for glycerol metabolism. This chain is HTH-type transcriptional regulator GolR, found in Listeria innocua serovar 6a (strain ATCC BAA-680 / CLIP 11262).